Reading from the N-terminus, the 308-residue chain is HTH-type transcriptional activator AllS (308 aa).

The 58-residue stretch at 2-59 (FDPETLRTFIAVAETGSFSKAAERLCKTTATISYRIKLLEENTGVALFFRTTRSVTLT) folds into the HTH lysR-type domain. Residues 19-38 (FSKAAERLCKTTATISYRIK) constitute a DNA-binding region (H-T-H motif).

It belongs to the LysR transcriptional regulatory family.

Positive regulator essential for the expression of allD operon. Binds to the allD promoter. The protein is HTH-type transcriptional activator AllS (allS) of Escherichia coli O6:K15:H31 (strain 536 / UPEC).